We begin with the raw amino-acid sequence, 561 residues long: Long-chain-fatty-acid--CoA ligase (561 aa).

Tyr-213–Ala-224 lines the ATP pocket.

It belongs to the ATP-dependent AMP-binding enzyme family. Mg(2+) is required as a cofactor.

It is found in the membrane. It catalyses the reaction a long-chain fatty acid + ATP + CoA = a long-chain fatty acyl-CoA + AMP + diphosphate. It participates in lipid metabolism; fatty acid beta-oxidation. Catalyzes the esterification, concomitant with transport, of exogenous long-chain fatty acids into metabolically active CoA thioesters for subsequent degradation or incorporation into phospholipids. The polypeptide is Long-chain-fatty-acid--CoA ligase (fadD) (Salmonella typhi).